Consider the following 188-residue polypeptide: Small ribosomal subunit protein uS7 (188 aa).

This sequence belongs to the universal ribosomal protein uS7 family. As to quaternary structure, part of the 30S ribosomal subunit.

Functionally, one of the primary rRNA binding proteins, it binds directly to 16S rRNA where it nucleates assembly of the head domain of the 30S subunit. Is located at the subunit interface close to the decoding center. In Methanococcus maripaludis (strain C7 / ATCC BAA-1331), this protein is Small ribosomal subunit protein uS7.